The primary structure comprises 98 residues: NADH-ubiquinone oxidoreductase chain 4L (98 aa).

3 helical membrane-spanning segments follow: residues 1-21, 29-49, and 61-81; these read MSLV…GLLM, SLLC…LTIL, and IILL…LVMV.

It belongs to the complex I subunit 4L family. Core subunit of respiratory chain NADH dehydrogenase (Complex I) which is composed of 45 different subunits.

The protein localises to the mitochondrion inner membrane. The enzyme catalyses a ubiquinone + NADH + 5 H(+)(in) = a ubiquinol + NAD(+) + 4 H(+)(out). In terms of biological role, core subunit of the mitochondrial membrane respiratory chain NADH dehydrogenase (Complex I) which catalyzes electron transfer from NADH through the respiratory chain, using ubiquinone as an electron acceptor. Part of the enzyme membrane arm which is embedded in the lipid bilayer and involved in proton translocation. The polypeptide is NADH-ubiquinone oxidoreductase chain 4L (MT-ND4L) (Muntiacus feae (Fea's muntjac)).